We begin with the raw amino-acid sequence, 246 residues long: MAMSSYLINSNYVDPKFPPCEEYSQSDYLPSHSPDYYSAQRQDPSFQHESIYHQRSGCADPPYSSCQGPGQPAAVISPRGHVLPTTALSTPLPEPSHHCDSVTPSPPPACGQTPTSQNTSTVSSRKDPVVYPWMKKVHVNIVSPNYSGGEPKRSRTAYTRQQVLELEKEFHYNRYLTRRRRVEIAHTLCLSERQIKIWFQNRRMKWKKDHKLPNTKIRSNSASTNSSGCPTLCSNQSRASGPPPSL.

Residues 23-125 are disordered; sequence YSQSDYLPSH…SQNTSTVSSR (103 aa). Composition is skewed to polar residues over residues 39–48 and 112–123; these read AQRQDPSFQH and QTPTSQNTSTVS. The Antp-type hexapeptide signature appears at 130–135; sequence VYPWMK. Positions 151 to 210 form a DNA-binding region, homeobox; that stretch reads PKRSRTAYTRQQVLELEKEFHYNRYLTRRRRVEIAHTLCLSERQIKIWFQNRRMKWKKDH. The interval 210-246 is disordered; it reads HKLPNTKIRSNSASTNSSGCPTLCSNQSRASGPPPSL. Residues 216–239 show a composition bias toward polar residues; that stretch reads KIRSNSASTNSSGCPTLCSNQSRA.

Belongs to the Antp homeobox family. Deformed subfamily.

It localises to the nucleus. Its function is as follows. Sequence-specific transcription factor which is part of a developmental regulatory system that provides cells with specific positional identities on the anterior-posterior axis. This chain is Homeobox protein Hox-B4a (hoxb4a), found in Danio rerio (Zebrafish).